The following is a 157-amino-acid chain: Protein NrdI (157 aa).

This sequence belongs to the NrdI family.

Probably involved in ribonucleotide reductase function. This Mycoplasma capricolum subsp. capricolum (strain California kid / ATCC 27343 / NCTC 10154) protein is Protein NrdI.